The chain runs to 347 residues: Protein pelota homolog (347 aa).

It belongs to the eukaryotic release factor 1 family. Pelota subfamily. In terms of assembly, monomer. It depends on a divalent metal cation as a cofactor.

The protein localises to the cytoplasm. May function in recognizing stalled ribosomes, interact with stem-loop structures in stalled mRNA molecules, and effect endonucleolytic cleavage of the mRNA. May play a role in the release non-functional ribosomes and degradation of damaged mRNAs. Has endoribonuclease activity. The protein is Protein pelota homolog of Methanothrix thermoacetophila (strain DSM 6194 / JCM 14653 / NBRC 101360 / PT) (Methanosaeta thermophila).